We begin with the raw amino-acid sequence, 663 residues long: DNA ligase (663 aa).

NAD(+) contacts are provided by residues 33-37 (DYSYD), 82-83 (SI), and glutamate 112. Lysine 114 functions as the N6-AMP-lysine intermediate in the catalytic mechanism. NAD(+)-binding residues include arginine 135, glutamate 171, lysine 285, and lysine 309. Residues cysteine 403, cysteine 406, cysteine 419, and cysteine 424 each coordinate Zn(2+). Residues 581 to 663 (DKEAPLQGKV…LRILDAKSVS (83 aa)) form the BRCT domain.

It belongs to the NAD-dependent DNA ligase family. LigA subfamily. It depends on Mg(2+) as a cofactor. The cofactor is Mn(2+).

It carries out the reaction NAD(+) + (deoxyribonucleotide)n-3'-hydroxyl + 5'-phospho-(deoxyribonucleotide)m = (deoxyribonucleotide)n+m + AMP + beta-nicotinamide D-nucleotide.. Its function is as follows. DNA ligase that catalyzes the formation of phosphodiester linkages between 5'-phosphoryl and 3'-hydroxyl groups in double-stranded DNA using NAD as a coenzyme and as the energy source for the reaction. It is essential for DNA replication and repair of damaged DNA. The polypeptide is DNA ligase (Chlamydia trachomatis serovar D (strain ATCC VR-885 / DSM 19411 / UW-3/Cx)).